Here is a 146-residue protein sequence, read N- to C-terminus: Hemoglobin subunit beta (146 aa).

The Globin domain occupies 2–146 (HWSAEEKQLI…VAHALARKYH (145 aa)). Residues H63 and H92 each contribute to the heme b site.

It belongs to the globin family. In terms of assembly, heterotetramer of two alpha chains and two beta chains. As to expression, red blood cells.

Its function is as follows. Involved in oxygen transport from the lung to the various peripheral tissues. The sequence is that of Hemoglobin subunit beta (HBB) from Eudyptes chrysocome (Western rockhopper penguin).